The chain runs to 549 residues: Urocanate hydratase (549 aa).

Residues 46–47, Gln-124, 170–172, Glu-190, Arg-195, 236–237, 257–261, 267–268, and Tyr-316 contribute to the NAD(+) site; these read GG, GMG, NA, QTSAH, and YV. The active site involves Cys-404. NAD(+) is bound at residue Gly-486.

This sequence belongs to the urocanase family. It depends on NAD(+) as a cofactor.

The protein resides in the cytoplasm. It carries out the reaction 4-imidazolone-5-propanoate = trans-urocanate + H2O. The protein operates within amino-acid degradation; L-histidine degradation into L-glutamate; N-formimidoyl-L-glutamate from L-histidine: step 2/3. Catalyzes the conversion of urocanate to 4-imidazolone-5-propionate. The sequence is that of Urocanate hydratase from Caldanaerobacter subterraneus subsp. tengcongensis (strain DSM 15242 / JCM 11007 / NBRC 100824 / MB4) (Thermoanaerobacter tengcongensis).